The sequence spans 149 residues: Oligosaccharyltransferase complex subunit OSTC (149 aa).

Topologically, residues 1-32 (METLFRLPFAVLECPNIKLKRPGWVHMPSAMT) are cytoplasmic. Residues 33 to 53 (VYALVVVSYFLITGGIIYDVI) traverse the membrane as a helical segment. Residues 54 to 83 (VEPPSVGSMTDEHGHQRPVAFLAYRVNGQY) are Extracellular-facing. A helical membrane pass occupies residues 84–104 (IMEGLASSFLFTMGGLGFIIL). At 105–117 (DRSNAPNIPKLNR) the chain is on the cytoplasmic side. A helical membrane pass occupies residues 118–138 (FLLLFIGFVSVLLSFFMARVF). The Extracellular segment spans residues 139 to 149 (MRMKLPGYLMG).

The protein belongs to the OSTC family. Specific component of the STT3A-containing form of the oligosaccharyltransferase (OST) complex.

It localises to the membrane. The protein operates within protein modification; protein glycosylation. Its function is as follows. Specific component of the STT3A-containing form of the oligosaccharyl transferase (OST) complex that catalyzes the initial transfer of a defined glycan (Glc(3)Man(9)GlcNAc(2) in eukaryotes) from the lipid carrier dolichol-pyrophosphate to an asparagine residue within an Asn-X-Ser/Thr consensus motif in nascent polypeptide chains, the first step in protein N-glycosylation. N-glycosylation occurs cotranslationally and the complex associates with the Sec61 complex at the channel-forming translocon complex that mediates protein translocation across the endoplasmic reticulum (ER). All subunits are required for a maximal enzyme activity. The sequence is that of Oligosaccharyltransferase complex subunit OSTC from Gallus gallus (Chicken).